The sequence spans 719 residues: DNA ligase (719 aa).

Residues Asp-42 to Asp-46, Ser-92 to Leu-93, and Glu-126 each bind NAD(+). Lys-128 (N6-AMP-lysine intermediate) is an active-site residue. Residues Arg-149, Glu-185, Lys-301, and Lys-325 each coordinate NAD(+). The Zn(2+) site is built by Cys-430, Cys-433, Cys-448, and Cys-454. The 80-residue stretch at Ala-640–Asp-719 folds into the BRCT domain.

Belongs to the NAD-dependent DNA ligase family. LigA subfamily. Mg(2+) serves as cofactor. It depends on Mn(2+) as a cofactor.

The enzyme catalyses NAD(+) + (deoxyribonucleotide)n-3'-hydroxyl + 5'-phospho-(deoxyribonucleotide)m = (deoxyribonucleotide)n+m + AMP + beta-nicotinamide D-nucleotide.. Its function is as follows. DNA ligase that catalyzes the formation of phosphodiester linkages between 5'-phosphoryl and 3'-hydroxyl groups in double-stranded DNA using NAD as a coenzyme and as the energy source for the reaction. It is essential for DNA replication and repair of damaged DNA. This Brucella melitensis biotype 2 (strain ATCC 23457) protein is DNA ligase.